Reading from the N-terminus, the 631-residue chain is Polyadenylate-binding protein, cytoplasmic and nuclear (631 aa).

A disordered region spans residues methionine 1–alanine 56. 4 RRM domains span residues alanine 58–arginine 136, glycine 146–serine 223, threonine 239–lysine 316, and valine 342–arginine 419. The disordered stretch occupies residues glycine 518 to proline 545. In terms of domain architecture, PABC spans proline 545–lysine 626.

The protein belongs to the polyadenylate-binding protein type-1 family.

It is found in the cytoplasm. The protein localises to the nucleus. Its function is as follows. Binds the poly(A) tail of mRNA. Appears to be an important mediator of the multiple roles of the poly(A) tail in mRNA biogenesis, stability and translation. In the nucleus, involved in both mRNA cleavage and polyadenylation. Is also required for efficient mRNA export to the cytoplasm. Acts in concert with a poly(A)-specific nuclease (PAN) to affect poly(A) tail shortening, which may occur concomitantly with either nucleocytoplasmic mRNA transport or translational initiation. In the cytoplasm, stimulates translation initiation and regulates mRNA decay through translation termination-coupled poly(A) shortening, probably mediated by PAN. The chain is Polyadenylate-binding protein, cytoplasmic and nuclear (PAB1) from Meyerozyma guilliermondii (strain ATCC 6260 / CBS 566 / DSM 6381 / JCM 1539 / NBRC 10279 / NRRL Y-324) (Yeast).